The chain runs to 525 residues: Vesicular inhibitory amino acid transporter (525 aa).

The Cytoplasmic segment spans residues 1 to 132 (MATLLRSKLS…WNVTNAIQGM (132 aa)). The tract at residues 69–111 (PCGDEGAEPPVEGDIHYQRGSGAPLPPSGSKDQVGAGGEFGGH) is disordered. A helical transmembrane segment spans residues 133–153 (FVLGLPYAILHGGYLGLFLII). The Lumenal, vesicle portion of the chain corresponds to 154–204 (FAAVVCCYTGKILIACLYEENEDGEVVRVRDSYVAIANACCAPRFPTLGGR). A 3'-nitrotyrosine modification is found at Tyr-186. Residues 205-225 (VVNVAQIIELVMTCILYVVVS) traverse the membrane as a helical segment. The Cytoplasmic portion of the chain corresponds to 226-265 (GNLMYNSFPGLPVSQKSWSIIATAVLLPCAFLKNLKAVSK). A helical membrane pass occupies residues 266–286 (FSLLCTLAHFVINILVIAYCL). Residues 287–305 (SRARDWAWEKVKFYIDVKK) are Lumenal, vesicle-facing. A helical membrane pass occupies residues 306 to 326 (FPISIGIIVFSYTSQIFLPSL). At 327 to 341 (EGNMQQPSEFHCMMN) the chain is on the cytoplasmic side. The helical transmembrane segment at 342–362 (WTHIAACVLKGLFALVAYLTW) threads the bilayer. The Lumenal, vesicle portion of the chain corresponds to 363 to 383 (ADETKEVITDNLPGSIRAVVN). The chain crosses the membrane as a helical span at residues 384–404 (IFLVAKALLSYPLPFFAAVEV). The Cytoplasmic segment spans residues 405–438 (LEKSLFQEGSRAFFPACYGGDGRLKSWGLTLRCA). Residues 439-459 (LVVFTLLMAIYVPHFALLMGL) traverse the membrane as a helical segment. Topologically, residues 460–461 (TG) are lumenal, vesicle. The helical transmembrane segment at 462-482 (SLTGAGLCFLLPSLFHLRLLW) threads the bilayer. The Cytoplasmic segment spans residues 483–489 (RKLLWHQ). Residues 490–510 (VFFDVAIFVIGGICSVSGFVH) traverse the membrane as a helical segment. Residues 511–525 (SLEGLIEAYRTNAED) are Lumenal, vesicle-facing.

This sequence belongs to the amino acid/polyamine transporter 2 family.

Its subcellular location is the cytoplasmic vesicle membrane. It is found in the presynapse. The enzyme catalyses 4-aminobutanoate(out) + n H(+)(in) = 4-aminobutanoate(in) + n H(+)(out). It carries out the reaction glycine(out) + n H(+)(in) = glycine(in) + n H(+)(out). It catalyses the reaction beta-alanine(out) + n H(+)(in) = beta-alanine(in) + n H(+)(out). Antiporter that exchanges vesicular protons for cytosolic 4-aminobutanoate or to a lesser extend glycine, thus allowing their secretion from nerve terminals. The transport is equally dependent on the chemical and electrical components of the proton gradient. May also transport beta-alanine. Acidification of GABAergic synaptic vesicles is a prerequisite for 4-aminobutanoate uptake. The chain is Vesicular inhibitory amino acid transporter from Macaca fascicularis (Crab-eating macaque).